Consider the following 88-residue polypeptide: Putative regulatory protein DvMF_1139 (88 aa).

Belongs to the RemA family.

The chain is Putative regulatory protein DvMF_1139 from Nitratidesulfovibrio vulgaris (strain DSM 19637 / Miyazaki F) (Desulfovibrio vulgaris).